Consider the following 540-residue polypeptide: MLO protein homolog 1 (540 aa).

The Extracellular segment spans residues Met1–Thr16. Residues Trp17–Leu37 traverse the membrane as a helical segment. At His38–Lys60 the chain is on the cytoplasmic side. A helical membrane pass occupies residues Ala61 to Ser81. Residues Lys82–His142 are Extracellular-facing. Residues Ile143 to Gly163 traverse the membrane as a helical segment. Residues Arg164–Lys265 are Cytoplasmic-facing. The chain crosses the membrane as a helical span at residues Val266–Ile286. A topological domain (extracellular) is located at residue His287. The chain crosses the membrane as a helical span at residues Gly288–Thr308. Over Lys309–Asp347 the chain is Cytoplasmic. Residues Trp348–Val368 form a helical membrane-spanning segment. Residues Trp369 to Asn383 lie on the Extracellular side of the membrane. The helical transmembrane segment at Ile384 to Ile404 threads the bilayer. The Cytoplasmic segment spans residues Thr405–Arg540. A calmodulin-binding region spans residues Glu426–Asp447. The disordered stretch occupies residues Ala468–Ser526. Basic and acidic residues-rich tracts occupy residues Leu474–Asp483 and Leu512–Trp521.

The protein belongs to the MLO family.

It localises to the membrane. Its function is as follows. May be involved in modulation of pathogen defense and leaf cell death. Activity seems to be regulated by Ca(2+)-dependent calmodulin binding and seems not to require heterotrimeric G proteins. The sequence is that of MLO protein homolog 1 (MLO1) from Oryza sativa subsp. japonica (Rice).